We begin with the raw amino-acid sequence, 386 residues long: Formate-dependent phosphoribosylglycinamide formyltransferase (386 aa).

N(1)-(5-phospho-beta-D-ribosyl)glycinamide is bound by residues 15–16 (EL) and Glu-75. ATP contacts are provided by residues Arg-107, Lys-148, 153 to 158 (SSGKGQ), 188 to 191 (EQFI), and Glu-196. Residues 112–301 (ALAAQQLNLQ…EFELHLRAIV (190 aa)) form the ATP-grasp domain. Residues Glu-260 and Glu-272 each coordinate Mg(2+). N(1)-(5-phospho-beta-D-ribosyl)glycinamide is bound by residues Asp-279, Lys-349, and 356–357 (RR).

This sequence belongs to the PurK/PurT family. As to quaternary structure, homodimer.

It catalyses the reaction N(1)-(5-phospho-beta-D-ribosyl)glycinamide + formate + ATP = N(2)-formyl-N(1)-(5-phospho-beta-D-ribosyl)glycinamide + ADP + phosphate + H(+). It participates in purine metabolism; IMP biosynthesis via de novo pathway; N(2)-formyl-N(1)-(5-phospho-D-ribosyl)glycinamide from N(1)-(5-phospho-D-ribosyl)glycinamide (formate route): step 1/1. Its function is as follows. Involved in the de novo purine biosynthesis. Catalyzes the transfer of formate to 5-phospho-ribosyl-glycinamide (GAR), producing 5-phospho-ribosyl-N-formylglycinamide (FGAR). Formate is provided by PurU via hydrolysis of 10-formyl-tetrahydrofolate. This Francisella tularensis subsp. tularensis (strain WY96-3418) protein is Formate-dependent phosphoribosylglycinamide formyltransferase.